Here is a 354-residue protein sequence, read N- to C-terminus: MSEQKPSLTYRDAGVDIDAGNDLVNRIKSTAARTRRPEVLGGLGGFGAMVSIPAGYKEPVLVSGTDGVGTKLRLAMQLQKHDSIGIDLVAMCVNDLVVGGAEPLFFLDYYATGKLNVDVAAQVVEGIGQGCEQAGCALVGGETAEMPGMYEGDDYDLAGFCVGIVERDKIIDGSRAQPGDSLLALGSSGPHSNGYSLIRKIIEVSGADLSQSMGDTTLADALMAPTRIYVKNLLKLIREVDVRALSHITGGGLPENIPRVLPKGTIAALDTQSWELPPVFQWLQNAGGVAQEEMYRTFNCGIGMVICVPEDQKALAMDTLNAMGEKVWQIGVMEAAESSDAEPVVRYAPGLLTA.

This sequence belongs to the AIR synthase family.

Its subcellular location is the cytoplasm. The enzyme catalyses 2-formamido-N(1)-(5-O-phospho-beta-D-ribosyl)acetamidine + ATP = 5-amino-1-(5-phospho-beta-D-ribosyl)imidazole + ADP + phosphate + H(+). It functions in the pathway purine metabolism; IMP biosynthesis via de novo pathway; 5-amino-1-(5-phospho-D-ribosyl)imidazole from N(2)-formyl-N(1)-(5-phospho-D-ribosyl)glycinamide: step 2/2. The chain is Phosphoribosylformylglycinamidine cyclo-ligase from Marinobacter nauticus (strain ATCC 700491 / DSM 11845 / VT8) (Marinobacter aquaeolei).